Consider the following 390-residue polypeptide: Branched-chain-amino-acid aminotransferase (390 aa).

N6-(pyridoxal phosphate)lysine is present on K225.

The protein belongs to the class-IV pyridoxal-phosphate-dependent aminotransferase family. As to quaternary structure, homodimer. It depends on pyridoxal 5'-phosphate as a cofactor.

It carries out the reaction L-leucine + 2-oxoglutarate = 4-methyl-2-oxopentanoate + L-glutamate. It catalyses the reaction L-isoleucine + 2-oxoglutarate = (S)-3-methyl-2-oxopentanoate + L-glutamate. The catalysed reaction is L-valine + 2-oxoglutarate = 3-methyl-2-oxobutanoate + L-glutamate. Catalyzes the first reaction in the catabolism of the essential branched chain amino acids leucine, isoleucine, and valine. The chain is Branched-chain-amino-acid aminotransferase from Monosiga brevicollis (Choanoflagellate).